Here is a 252-residue protein sequence, read N- to C-terminus: Beta-crystallin B1 (252 aa).

Low complexity-rich tracts occupy residues 1–15 and 24–37; these read MSQAAKASASATVAV and KGAPPAGTSPSPGT. Positions 1 to 42 are disordered; the sequence is MSQAAKASASATVAVNPGPDTKGKGAPPAGTSPSPGTTLAPT. Ser2 is subject to N-acetylserine. Residues 2 to 58 are N-terminal arm; sequence SQAAKASASATVAVNPGPDTKGKGAPPAGTSPSPGTTLAPTTVPITSAKAAELPPGN. Beta/gamma crystallin 'Greek key' domains lie at 59–98 and 99–143; these read YRLVVFELENFQGRRAEFSGECSNLADRGFDRVRSIIVSA and GPWV…RPIK. Residues 144 to 148 are connecting peptide; it reads MDAQE. 2 consecutive Beta/gamma crystallin 'Greek key' domains span residues 149 to 190 and 191 to 233; these read HKIS…KVSS and GTWV…RRLR. The C-terminal arm stretch occupies residues 235–252; sequence KQWHLEGSFPVLATEPPK.

It belongs to the beta/gamma-crystallin family. Homo/heterodimer, or complexes of higher-order. The structure of beta-crystallin oligomers seems to be stabilized through interactions between the N-terminal arms. Specific cleavages in the N-terminal arm occur during lens maturation and give rise to truncated forms, leading to impaired oligomerization and protein insolubilization.

Its function is as follows. Crystallins are the dominant structural components of the vertebrate eye lens. The chain is Beta-crystallin B1 (CRYBB1) from Homo sapiens (Human).